The following is a 183-amino-acid chain: Ribulose bisphosphate carboxylase small subunit, chloroplastic 5 (183 aa).

A chloroplast-targeting transit peptide spans 1-42 (MAAAMMNKSVLLNKQCGKPAAVPKVVMSKGGFARTSAVNKNR).

The protein belongs to the RuBisCO small chain family. In terms of assembly, heterohexadecamer of 8 large and 8 small subunits.

It is found in the plastid. The protein resides in the chloroplast. Functionally, ruBisCO catalyzes two reactions: the carboxylation of D-ribulose 1,5-bisphosphate, the primary event in carbon dioxide fixation, as well as the oxidative fragmentation of the pentose substrate. Both reactions occur simultaneously and in competition at the same active site. Although the small subunit is not catalytic it is essential for maximal activity. This Acetabularia acetabulum (Mermaid's wine glass) protein is Ribulose bisphosphate carboxylase small subunit, chloroplastic 5.